The primary structure comprises 59 residues: Cortexin domain-containing 1 protein (59 aa).

The helical transmembrane segment at 17–37 threads the bilayer; it reads LTLACFVFLCLFLVVMIIRCA.

It is found in the membrane. This Homo sapiens (Human) protein is Cortexin domain-containing 1 protein.